The following is a 267-amino-acid chain: 4-hydroxy-tetrahydrodipicolinate reductase (267 aa).

NAD(+) is bound by residues 8–13 (GAAGRM) and aspartate 34. Residue arginine 35 coordinates NADP(+). NAD(+)-binding positions include 98–100 (GTT) and 122–125 (AANF). Histidine 155 functions as the Proton donor/acceptor in the catalytic mechanism. Histidine 156 contributes to the (S)-2,3,4,5-tetrahydrodipicolinate binding site. The active-site Proton donor is the lysine 159. 165–166 (GT) provides a ligand contact to (S)-2,3,4,5-tetrahydrodipicolinate.

This sequence belongs to the DapB family.

Its subcellular location is the cytoplasm. The enzyme catalyses (S)-2,3,4,5-tetrahydrodipicolinate + NAD(+) + H2O = (2S,4S)-4-hydroxy-2,3,4,5-tetrahydrodipicolinate + NADH + H(+). It carries out the reaction (S)-2,3,4,5-tetrahydrodipicolinate + NADP(+) + H2O = (2S,4S)-4-hydroxy-2,3,4,5-tetrahydrodipicolinate + NADPH + H(+). It functions in the pathway amino-acid biosynthesis; L-lysine biosynthesis via DAP pathway; (S)-tetrahydrodipicolinate from L-aspartate: step 4/4. In terms of biological role, catalyzes the conversion of 4-hydroxy-tetrahydrodipicolinate (HTPA) to tetrahydrodipicolinate. This is 4-hydroxy-tetrahydrodipicolinate reductase from Pseudomonas putida (strain ATCC 47054 / DSM 6125 / CFBP 8728 / NCIMB 11950 / KT2440).